Consider the following 800-residue polypeptide: DNA mismatch repair protein MutS (800 aa).

616–623 is an ATP binding site; that stretch reads GPNMGGKS.

This sequence belongs to the DNA mismatch repair MutS family.

In terms of biological role, this protein is involved in the repair of mismatches in DNA. It is possible that it carries out the mismatch recognition step. This protein has a weak ATPase activity. The chain is DNA mismatch repair protein MutS from Buchnera aphidicola subsp. Baizongia pistaciae (strain Bp).